A 356-amino-acid polypeptide reads, in one-letter code: Na(+)/H(+) exchange regulatory cofactor NHE-RF1 (356 aa).

Ser-2 carries the N-acetylserine modification. Ser-2 and Ser-46 each carry phosphoserine. The PDZ 1 domain maps to 14-94 (LCCLEKGPNG…AVRLLVVDPE (81 aa)). The disordered stretch occupies residues 113–142 (AQEKSEHTEPPAAADTKKAGDQNEAEKSHL). The PDZ 2 domain maps to 151–231 (LCTMKKGPNG…EAKLLVVDKE (81 aa)). Residues 265–356 (NSREALVEPA…SKKNELFSNL (92 aa)) form a disordered region. Ser-266, Ser-277, Ser-287, and Ser-288 each carry phosphoserine. Residues 272–288 (EPASESPRPALARSASS) show a composition bias toward low complexity. Thr-290 carries the post-translational modification Phosphothreonine. Phosphoserine is present on residues Ser-291 and Ser-299. Over residues 307-317 (EPSSTSSSSDP) the composition is skewed to low complexity. Residues 346 to 356 (WSKKNELFSNL) are compositionally biased toward basic and acidic residues.

Homodimer, and heterodimer with NHERF2. Binds the N-termini of EZR, RDX and MSN. Binds the C-termini of PDGFRA, PDGFRB, ADRB2, NOS2 and CFTR. Binds ARHGAP17, EPI64, RACK1, OPRK1, GNAQ, CTNNB1 and PLCB3. Binds PDZK1. Interacts with CLCN3. Binds the C-terminus of PAG1. In resting T-cells, part of a PAG1-NHERF1-MSN complex which is disrupted upon TCR activation. Forms a complex with CFTR and SLC4A7. Forms a complex with SLC4A7 and ATP6V1B1. Interacts with TRPC4 (via the PDZ-binding domain). Directly interacts with HTR4. Interacts (via the PDZ 1 domain) with PODXL (via the C-terminal PDZ-binding motif DTHL); interaction is not detected in glomerular epithelium cells. Interacts (via the PDZ 1 domain) with PODXL (via the C-terminal PDZ-binding motif DTHL); the interaction take place early in the secretory pathway and is necessary for its apical membrane sorting. Interacts with SLC26A3. Interacts with MCC. Interacts with SLC34A1. Interacts (via the PDZ domains) with SLC26A6 isoform 4 and isoform 5. Interacts (via PDZ domains) with ACE2 (via PDZ-binding motif); the interaction may enhance ACE2 membrane residence.

It is found in the cytoplasm. The protein resides in the apical cell membrane. It localises to the cell projection. Its subcellular location is the filopodium. The protein localises to the ruffle. It is found in the microvillus. The protein resides in the endomembrane system. Scaffold protein that connects plasma membrane proteins with members of the ezrin/moesin/radixin family and thereby helps to link them to the actin cytoskeleton and to regulate their surface expression. Necessary for recycling of internalized ADRB2. Was first known to play a role in the regulation of the activity and subcellular location of SLC9A3. Necessary for cAMP-mediated phosphorylation and inhibition of SLC9A3. Involved in sperm capacitation. May participate in the regulation of the chloride and bicarbonate homeostasis in spermatozoa. May enhance Wnt signaling. May participate in HTR4 targeting to microvilli. Involved in the regulation of phosphate reabsorption in the renal proximal tubules. The polypeptide is Na(+)/H(+) exchange regulatory cofactor NHE-RF1 (Nherf1) (Rattus norvegicus (Rat)).